A 554-amino-acid polypeptide reads, in one-letter code: Glutamine--tRNA ligase (554 aa).

The 'HIGH' region motif lies at 34–44 (PEPNGYLHIGH). Residues 35 to 37 (EPN) and 41 to 47 (HIGHAKS) each bind ATP. Asp67 and Tyr212 together coordinate L-glutamine. ATP is bound by residues Thr231, 261–262 (RL), and 269–271 (MSK). Residues 268–272 (VMSKR) carry the 'KMSKS' region motif. The interaction with tRNA stretch occupies residues 317 to 324 (TKQDNTIE).

This sequence belongs to the class-I aminoacyl-tRNA synthetase family. In terms of assembly, monomer.

It is found in the cytoplasm. It carries out the reaction tRNA(Gln) + L-glutamine + ATP = L-glutaminyl-tRNA(Gln) + AMP + diphosphate. The chain is Glutamine--tRNA ligase from Shigella dysenteriae serotype 1 (strain Sd197).